We begin with the raw amino-acid sequence, 316 residues long: Serpentine receptor class gamma-4 (316 aa).

Transmembrane regions (helical) follow at residues 21–41 (FVYL…IWGT), 50–70 (SFFT…FLDV), 99–121 (IVYP…LSIN), 140–160 (MKKV…NVII), 188–208 (FQII…SITL), 229–249 (TAWI…FAFF), and 258–278 (IFYI…PIVM).

Belongs to the nematode receptor-like protein srg family.

It is found in the membrane. The chain is Serpentine receptor class gamma-4 (srg-4) from Caenorhabditis elegans.